Here is a 188-residue protein sequence, read N- to C-terminus: dCTP deaminase (188 aa).

Residues 111-116, 135-137, Q156, Y170, and Q180 each bind dCTP; these read KSTYAR and TLE. E137 functions as the Proton donor/acceptor in the catalytic mechanism.

The protein belongs to the dCTP deaminase family. As to quaternary structure, homotrimer.

The catalysed reaction is dCTP + H2O + H(+) = dUTP + NH4(+). It functions in the pathway pyrimidine metabolism; dUMP biosynthesis; dUMP from dCTP (dUTP route): step 1/2. Catalyzes the deamination of dCTP to dUTP. The chain is dCTP deaminase from Dechloromonas aromatica (strain RCB).